The primary structure comprises 260 residues: Phosphate import ATP-binding protein PstB (260 aa).

The 242-residue stretch at 14-255 (IETENLNLFY…PKNTKTEEYI (242 aa)) folds into the ABC transporter domain. 46–53 (GPSGCGKS) contributes to the ATP binding site.

This sequence belongs to the ABC transporter superfamily. Phosphate importer (TC 3.A.1.7) family. As to quaternary structure, the complex is composed of two ATP-binding proteins (PstB), two transmembrane proteins (PstC and PstA) and a solute-binding protein (PstS).

It is found in the cell inner membrane. It carries out the reaction phosphate(out) + ATP + H2O = ADP + 2 phosphate(in) + H(+). Functionally, part of the ABC transporter complex PstSACB involved in phosphate import. Responsible for energy coupling to the transport system. This chain is Phosphate import ATP-binding protein PstB, found in Borreliella burgdorferi (strain ATCC 35210 / DSM 4680 / CIP 102532 / B31) (Borrelia burgdorferi).